Here is a 166-residue protein sequence, read N- to C-terminus: MDKEKFQQKAVKQTKQKKSTSAEFLMVKEYTDATEGAGNPGFNMSSPELPAHQTPQEKVVRHDMLDHTLATHQQKSRLPASAGPKGVTSVLIVLTLAALLIRPGCPEREPGIPLKRACTASVEDLFGARVGGDAAEDLCTHWVQVTHSFVGEGYERMNSLFFGRLR.

A disordered region spans residues 1-22 (MDKEKFQQKAVKQTKQKKSTSA).

This is Orofacial cleft 1 candidate gene 1 protein homolog (Ofcc1) from Mus musculus (Mouse).